A 149-amino-acid chain; its full sequence is Transcriptional repressor NrdR (149 aa).

Residues 3 to 34 (CPFCSATDTKVIDSRLVAEGHQVRRRRECTEC) fold into a zinc finger. Positions 49–139 (PRVIKRDGSR…VYRAFEDVSE (91 aa)) constitute an ATP-cone domain.

The protein belongs to the NrdR family. It depends on Zn(2+) as a cofactor.

Functionally, negatively regulates transcription of bacterial ribonucleotide reductase nrd genes and operons by binding to NrdR-boxes. The chain is Transcriptional repressor NrdR from Shewanella baltica (strain OS223).